The chain runs to 150 residues: Small ribosomal subunit protein eS19 (150 aa).

The protein belongs to the eukaryotic ribosomal protein eS19 family. As to quaternary structure, part of the 30S ribosomal subunit.

Functionally, may be involved in maturation of the 30S ribosomal subunit. This chain is Small ribosomal subunit protein eS19 (rps19e), found in Pyrococcus abyssi (strain GE5 / Orsay).